The primary structure comprises 547 residues: Chaperonin GroEL (547 aa).

ATP contacts are provided by residues 30 to 33 (TLGP), lysine 51, 87 to 91 (DGTTT), glycine 415, and aspartate 496. The segment at 528 to 547 (KGGGAPAGGGMPGGMGDMDF) is disordered.

It belongs to the chaperonin (HSP60) family. In terms of assembly, forms a cylinder of 14 subunits composed of two heptameric rings stacked back-to-back. Interacts with the co-chaperonin GroES.

Its subcellular location is the cytoplasm. The enzyme catalyses ATP + H2O + a folded polypeptide = ADP + phosphate + an unfolded polypeptide.. In terms of biological role, together with its co-chaperonin GroES, plays an essential role in assisting protein folding. The GroEL-GroES system forms a nano-cage that allows encapsulation of the non-native substrate proteins and provides a physical environment optimized to promote and accelerate protein folding. The polypeptide is Chaperonin GroEL (Caulobacter vibrioides (strain ATCC 19089 / CIP 103742 / CB 15) (Caulobacter crescentus)).